Consider the following 272-residue polypeptide: Phosphoglycolate phosphatase 1 (272 aa).

Asp19 (nucleophile) is an active-site residue. Mg(2+) is bound by residues Asp19, Asp21, and Asp182.

It belongs to the HAD-like hydrolase superfamily. CbbY/CbbZ/Gph/YieH family. Mg(2+) is required as a cofactor.

The catalysed reaction is 2-phosphoglycolate + H2O = glycolate + phosphate. The protein operates within organic acid metabolism; glycolate biosynthesis; glycolate from 2-phosphoglycolate: step 1/1. In terms of biological role, specifically catalyzes the dephosphorylation of 2-phosphoglycolate. Is involved in the dissimilation of the intracellular 2-phosphoglycolate formed during the DNA repair of 3'-phosphoglycolate ends, a major class of DNA lesions induced by oxidative stress. The protein is Phosphoglycolate phosphatase 1 of Pseudomonas aeruginosa (strain ATCC 15692 / DSM 22644 / CIP 104116 / JCM 14847 / LMG 12228 / 1C / PRS 101 / PAO1).